The primary structure comprises 96 residues: Protein transport protein Sec61 subunit beta (96 aa).

Residues 1-17 show a composition bias toward polar residues; that stretch reads MPGPTPSGTNVGSSGRS. Residues 1-54 form a disordered region; sequence MPGPTPSGTNVGSSGRSPSKAVAARAAGSTVRQRKNASCGTRSAGRTTSAGTGG. Residue Pro-2 is modified to N-acetylproline. The Cytoplasmic portion of the chain corresponds to 2–71; sequence PGPTPSGTNV…DSPGLKVGPV (70 aa). Ser-7 is subject to Phosphoserine. Phosphothreonine is present on Thr-9. Residues Ser-13, Ser-14, and Ser-17 each carry the phosphoserine modification. Cys-39 is lipidated: S-palmitoyl cysteine. Residues 40 to 50 are compositionally biased toward low complexity; that stretch reads GTRSAGRTTSA. Residues 72-91 form a helical membrane-spanning segment; that stretch reads PVLVMSLLFIASVFMLHIWG. The Lumenal portion of the chain corresponds to 92–96; it reads KYTRS.

Belongs to the SEC61-beta family. The SEC61 channel-forming translocon complex consists of channel-forming core components SEC61A1, SEC61B and SEC61G and different auxiliary components such as SEC62 and SEC63. The SEC61 channel associates with the multi-pass translocon (MPT) complex. Interacts with TRAM1.

The protein resides in the endoplasmic reticulum membrane. Its function is as follows. Component of SEC61 channel-forming translocon complex that mediates transport of signal peptide-containing precursor polypeptides across the endoplasmic reticulum (ER). Forms a ribosome receptor and a gated pore in the ER membrane, both functions required for cotranslational translocation of nascent polypeptides. The SEC61 channel is also involved in ER membrane insertion of transmembrane proteins: it mediates membrane insertion of the first few transmembrane segments of proteins, while insertion of subsequent transmembrane regions of multi-pass membrane proteins is mediated by the multi-pass translocon (MPT) complex. The SEC61 channel cooperates with the translocating protein TRAM1 to import nascent proteins into the ER. In Canis lupus familiaris (Dog), this protein is Protein transport protein Sec61 subunit beta (SEC61B).